A 96-amino-acid chain; its full sequence is Putative pterin-4-alpha-carbinolamine dehydratase (96 aa).

Belongs to the pterin-4-alpha-carbinolamine dehydratase family.

It catalyses the reaction (4aS,6R)-4a-hydroxy-L-erythro-5,6,7,8-tetrahydrobiopterin = (6R)-L-erythro-6,7-dihydrobiopterin + H2O. The sequence is that of Putative pterin-4-alpha-carbinolamine dehydratase from Synechocystis sp. (strain ATCC 27184 / PCC 6803 / Kazusa).